Reading from the N-terminus, the 238-residue chain is Serine protease SplE (238 aa).

The signal sequence occupies residues 1–36; sequence MNKNIIIKSIAALTILTSVTGVGTTVVEGIQQTAKA. Residues His75, Asp113, and Ser191 each act as charge relay system in the active site.

Belongs to the peptidase S1B family.

It is found in the secreted. This Staphylococcus aureus (strain USA300) protein is Serine protease SplE (splE).